A 477-amino-acid chain; its full sequence is Glutamyl-tRNA(Gln) amidotransferase subunit A (477 aa).

Catalysis depends on charge relay system residues Lys71 and Ser146. The Acyl-ester intermediate role is filled by Ser170.

It belongs to the amidase family. GatA subfamily. In terms of assembly, heterotrimer of A, B and C subunits.

It catalyses the reaction L-glutamyl-tRNA(Gln) + L-glutamine + ATP + H2O = L-glutaminyl-tRNA(Gln) + L-glutamate + ADP + phosphate + H(+). Its function is as follows. Allows the formation of correctly charged Gln-tRNA(Gln) through the transamidation of misacylated Glu-tRNA(Gln) in organisms which lack glutaminyl-tRNA synthetase. The reaction takes place in the presence of glutamine and ATP through an activated gamma-phospho-Glu-tRNA(Gln). The sequence is that of Glutamyl-tRNA(Gln) amidotransferase subunit A from Halothermothrix orenii (strain H 168 / OCM 544 / DSM 9562).